We begin with the raw amino-acid sequence, 726 residues long: Catalase-peroxidase (726 aa).

Positions 1–33 (MSTSDDIHNTTATGKCPFHQGGHDQSAGGGTTT) are disordered. Positions 105–226 (WHGAGTYRSI…LGATEMGLIY (122 aa)) form a cross-link, tryptophyl-tyrosyl-methioninium (Trp-Tyr) (with M-252). Histidine 106 functions as the Proton acceptor in the catalytic mechanism. Positions 226–252 (YVNPEGPDHSGEPLSAAAAIRATFGNM) form a cross-link, tryptophyl-tyrosyl-methioninium (Tyr-Met) (with W-105). Residue histidine 267 coordinates heme b.

The protein belongs to the peroxidase family. Peroxidase/catalase subfamily. In terms of assembly, homodimer or homotetramer. Heme b serves as cofactor. In terms of processing, formation of the three residue Trp-Tyr-Met cross-link is important for the catalase, but not the peroxidase activity of the enzyme.

The catalysed reaction is H2O2 + AH2 = A + 2 H2O. The enzyme catalyses 2 H2O2 = O2 + 2 H2O. In terms of biological role, bifunctional enzyme with both catalase and broad-spectrum peroxidase activity. The protein is Catalase-peroxidase of Escherichia coli (strain UTI89 / UPEC).